The primary structure comprises 440 residues: Ribosomal protein uS12 methylthiotransferase RimO (440 aa).

The region spanning 1–117 (MKVHLTSLGC…VIEAVAGKES (117 aa)) is the MTTase N-terminal domain. [4Fe-4S] cluster is bound by residues Cys-10, Cys-46, Cys-80, Cys-155, Cys-159, and Cys-162. Positions 141-371 (CATPHTVYVK…MTAQIDISSR (231 aa)) constitute a Radical SAM core domain. One can recognise a TRAM domain in the interval 374–440 (AKRVGSREPV…SAYDLTGEAQ (67 aa)).

It belongs to the methylthiotransferase family. RimO subfamily. Requires [4Fe-4S] cluster as cofactor.

It is found in the cytoplasm. The catalysed reaction is L-aspartate(89)-[ribosomal protein uS12]-hydrogen + (sulfur carrier)-SH + AH2 + 2 S-adenosyl-L-methionine = 3-methylsulfanyl-L-aspartate(89)-[ribosomal protein uS12]-hydrogen + (sulfur carrier)-H + 5'-deoxyadenosine + L-methionine + A + S-adenosyl-L-homocysteine + 2 H(+). In terms of biological role, catalyzes the methylthiolation of an aspartic acid residue of ribosomal protein uS12. The protein is Ribosomal protein uS12 methylthiotransferase RimO of Desulfosudis oleivorans (strain DSM 6200 / JCM 39069 / Hxd3) (Desulfococcus oleovorans).